The following is an 893-amino-acid chain: 104 kDa microneme/rhoptry antigen (893 aa).

The N-terminal stretch at 1–19 (MKFLVLLFNILCLFPILGA) is a signal peptide. Disordered stretches follow at residues 492–666 (SKKK…FDPK), 681–799 (KTKE…PTGK), and 818–873 (KEHM…RKPD). 2 stretches are compositionally biased toward basic and acidic residues: residues 525 to 565 (SESK…EHKP) and 573 to 591 (KRPE…ESPK). The segment covering 595–606 (RPVSPQRPVSPK) has biased composition (low complexity). Basic and acidic residues-rich tracts occupy residues 731–755 (EEVK…DSPT), 788–797 (EAGRILRDPT), and 818–830 (KEHM…KIVV). The segment covering 831–841 (DDDGTEADDED) has biased composition (acidic residues). Positions 851–869 (STVRRRRPRPKKSSKSSKP) are enriched in basic residues. A lipid anchor (GPI-anchor amidated aspartate) is attached at D873. The propeptide at 874 to 893 (SAFVPSIIFIFLVSLIVGIL) is removed in mature form.

It is found in the cell membrane. This is 104 kDa microneme/rhoptry antigen from Theileria annulata.